The chain runs to 174 residues: Large ribosomal subunit protein bL17 (174 aa).

Belongs to the bacterial ribosomal protein bL17 family. In terms of assembly, part of the 50S ribosomal subunit. Contacts protein L32.

This is Large ribosomal subunit protein bL17 from Acetivibrio thermocellus (strain ATCC 27405 / DSM 1237 / JCM 9322 / NBRC 103400 / NCIMB 10682 / NRRL B-4536 / VPI 7372) (Clostridium thermocellum).